We begin with the raw amino-acid sequence, 143 residues long: Small ribosomal subunit protein bS6 (143 aa).

The interval 100–143 (QSFIMKSKDDKGDKPERRRRDDDESGDVGVSNDSDNDGGNAEAA) is disordered. Positions 105–121 (KSKDDKGDKPERRRRDD) are enriched in basic and acidic residues. Over residues 126–143 (DVGVSNDSDNDGGNAEAA) the composition is skewed to low complexity.

The protein belongs to the bacterial ribosomal protein bS6 family.

Functionally, binds together with bS18 to 16S ribosomal RNA. In Xylella fastidiosa (strain M12), this protein is Small ribosomal subunit protein bS6.